Here is a 212-residue protein sequence, read N- to C-terminus: Holliday junction branch migration complex subunit RuvA (212 aa).

The interval 1-63 (MIAKLKGLID…EDAISLFGFL (63 aa)) is domain I. Residues 64-142 (ETGERDWFRL…KIALGGFSPG (79 aa)) are domain II. The flexible linker stretch occupies residues 143-155 (GIKDALSASAPLP). Residues 156–212 (AASGRMEDAVSALVNLGYKRLEAFQAVGETARELGDEADSSALIRAALKHLGKGLLG) are domain III.

It belongs to the RuvA family. As to quaternary structure, homotetramer. Forms an RuvA(8)-RuvB(12)-Holliday junction (HJ) complex. HJ DNA is sandwiched between 2 RuvA tetramers; dsDNA enters through RuvA and exits via RuvB. An RuvB hexamer assembles on each DNA strand where it exits the tetramer. Each RuvB hexamer is contacted by two RuvA subunits (via domain III) on 2 adjacent RuvB subunits; this complex drives branch migration. In the full resolvosome a probable DNA-RuvA(4)-RuvB(12)-RuvC(2) complex forms which resolves the HJ.

It is found in the cytoplasm. The RuvA-RuvB-RuvC complex processes Holliday junction (HJ) DNA during genetic recombination and DNA repair, while the RuvA-RuvB complex plays an important role in the rescue of blocked DNA replication forks via replication fork reversal (RFR). RuvA specifically binds to HJ cruciform DNA, conferring on it an open structure. The RuvB hexamer acts as an ATP-dependent pump, pulling dsDNA into and through the RuvAB complex. HJ branch migration allows RuvC to scan DNA until it finds its consensus sequence, where it cleaves and resolves the cruciform DNA. This Paramagnetospirillum magneticum (strain ATCC 700264 / AMB-1) (Magnetospirillum magneticum) protein is Holliday junction branch migration complex subunit RuvA.